A 165-amino-acid chain; its full sequence is uncharacterized protein (165 aa).

Residues 10-27 (VSLTIVFVLFFSADVSLT) form a helical membrane-spanning segment.

The protein resides in the membrane. This is an uncharacterized protein from Saccharomyces cerevisiae (strain ATCC 204508 / S288c) (Baker's yeast).